We begin with the raw amino-acid sequence, 372 residues long: N-methyl-L-tryptophan oxidase (372 aa).

Position 4–34 (4–34) interacts with FAD; that stretch reads DLIIIGSGSVGAAAGYYATRAGLNVLMTDAH. Cysteine 308 is subject to S-8alpha-FAD cysteine.

It belongs to the MSOX/MTOX family. MTOX subfamily. In terms of assembly, monomer. FAD serves as cofactor.

It carries out the reaction N(alpha)-methyl-L-tryptophan + O2 + H2O = L-tryptophan + formaldehyde + H2O2. Catalyzes the oxidative demethylation of N-methyl-L-tryptophan. This chain is N-methyl-L-tryptophan oxidase, found in Escherichia coli O81 (strain ED1a).